Reading from the N-terminus, the 40-residue chain is Natriuretic peptide HsNP-b (40 aa).

A propeptide spanning residues 1–8 (SGSKTAKI) is cleaved from the precursor. The interval 1–40 (SGSKTAKIGDGCFGVPIDHIGSTTDLGCGRPRPKPTPRGS) is disordered. An intrachain disulfide couples Cys12 to Cys28. The segment covering 31–40 (PRPKPTPRGS) has biased composition (basic residues).

This sequence belongs to the natriuretic peptide family. In terms of tissue distribution, expressed by the venom gland.

It localises to the secreted. Functionally, snake venom natriuretic peptide that targets both NPR1 and NPR2. Exhibits hypotensive and vasodepressor activities. The polypeptide is Natriuretic peptide HsNP-b (Hoplocephalus stephensii (Stephens's banded snake)).